The primary structure comprises 165 residues: Glycine cleavage system H protein, mitochondrial (165 aa).

A mitochondrion-targeting transit peptide spans 1–31 (MALRIWASSTAKALRLSSASRPHFSPLFRCF). Residues 55 to 137 (VATIGITDHA…YEDGWMIKVK (83 aa)) enclose the Lipoyl-binding domain. Lysine 96 carries the N6-lipoyllysine modification.

It belongs to the GcvH family. The glycine cleavage system is composed of four components that only loosely associate: the P protein (EC 1.4.4.2), the T protein (EC 2.1.2.10), the L protein (EC 1.8.1.4) and the lipoyl-bearing H protein. The cofactor is (R)-lipoate. In terms of tissue distribution, expressed in roots, stems and leaves.

The protein resides in the mitochondrion. Functionally, the glycine cleavage system catalyzes the degradation of glycine. The H protein shuttles the methylamine group of glycine from the P protein to the T protein. This Flaveria trinervia (Clustered yellowtops) protein is Glycine cleavage system H protein, mitochondrial (GDCSH).